The following is a 458-amino-acid chain: Sensor histidine kinase ZraS (458 aa).

Residues 1–14 (MRFMQRSKDSLAKW) lie on the Cytoplasmic side of the membrane. Residues 15 to 35 (LSAILPVVIVGLVGLFAVTVI) form a helical membrane-spanning segment. The Periplasmic segment spans residues 36–194 (RDYGRETAAA…SAEDREQRNT (159 aa)). A helical membrane pass occupies residues 195–215 (LIILFALATVLLASVLSFFWY). Residues 216-458 (RRYLRSRQLL…VNITRKDPQG (243 aa)) lie on the Cytoplasmic side of the membrane. Residues 244–451 (GVAHEIRNPL…RFTLWLPVNI (208 aa)) enclose the Histidine kinase domain. His247 carries the phosphohistidine; by autocatalysis modification.

Autophosphorylated.

It localises to the cell inner membrane. The enzyme catalyses ATP + protein L-histidine = ADP + protein N-phospho-L-histidine.. Activity of the ZraS/ZraR two-component system is repressed by the zinc-bound form of ZraP, which probably interacts with the periplasmic region of ZraS. Part of the Zra signaling pathway, an envelope stress response (ESR) system composed of the periplasmic accessory protein ZraP, the histidine kinase ZraS and the transcriptional regulator ZraR. The ZraPSR system contributes to antibiotic resistance and is important for membrane integrity in the presence of membrane-targeting biocides. ZraS is a member of the two-component regulatory system ZraS/ZraR. Functions as a membrane-associated sensor kinase that phosphorylates ZraR in response to high concentrations of Zn(2+) or Pb(2+) in the medium. The protein is Sensor histidine kinase ZraS (zraS) of Escherichia coli O157:H7.